Consider the following 473-residue polypeptide: Mannose-1-phosphate guanylyltransferase (473 aa).

This sequence belongs to the mannose-6-phosphate isomerase type 2 family. In terms of assembly, homodimer.

The enzyme catalyses alpha-D-mannose 1-phosphate + GTP + H(+) = GDP-alpha-D-mannose + diphosphate. It participates in nucleotide-sugar biosynthesis; GDP-alpha-D-mannose biosynthesis; GDP-alpha-D-mannose from alpha-D-mannose 1-phosphate (GTP route): step 1/1. Its pathway is bacterial outer membrane biogenesis; LPS O-antigen biosynthesis. Its function is as follows. Involved in GDP-mannose biosynthesis which serves as the activated sugar nucleotide precursor for mannose residues in cell surface polysaccharides. This enzyme participates in synthesis of the LPS group C2 O antigen. In Salmonella muenchen, this protein is Mannose-1-phosphate guanylyltransferase (rfbM).